A 274-amino-acid chain; its full sequence is MAIYLYKTSTPSTRNGAVDSQVKSNPRNNLIYGQHHCGKGRNARGIITARHRGGGHKRLYRKIDFRRNANDIYGRIVTIEYDPNRNAYICLIHYGDGEKRYILHPRGAIIGDTIVSGTEVPIKMGNALPLTDMPLGTAIHNIEITLGKGGQLARAAGAVAKLIAKEGKSATLKLPSGEVRLISKNCSATVGQVGNVGVNQKSLGRAGSKRWLGKRPVVRGVVMNPVDHPHGGGEGRAPIGRKKPVTPWGYPALGRRTRKRKKYSETLILRRRSK.

The tract at residues 224 to 252 (NPVDHPHGGGEGRAPIGRKKPVTPWGYPA) is disordered.

It belongs to the universal ribosomal protein uL2 family. As to quaternary structure, part of the 50S ribosomal subunit.

The protein resides in the plastid. It localises to the chloroplast. This Capsella bursa-pastoris (Shepherd's purse) protein is Large ribosomal subunit protein uL2cz/uL2cy (rpl2-A).